Here is a 239-residue protein sequence, read N- to C-terminus: Elongation factor Ts (239 aa).

The segment at 82 to 85 (TDFV) is involved in Mg(2+) ion dislocation from EF-Tu. The interval 213-239 (AAQTKPKAEEKPAAKKATSKKKKGKKK) is disordered. Basic residues predominate over residues 229 to 239 (ATSKKKKGKKK).

The protein belongs to the EF-Ts family.

It localises to the cytoplasm. Functionally, associates with the EF-Tu.GDP complex and induces the exchange of GDP to GTP. It remains bound to the aminoacyl-tRNA.EF-Tu.GTP complex up to the GTP hydrolysis stage on the ribosome. The sequence is that of Elongation factor Ts from Acaryochloris marina (strain MBIC 11017).